The following is a 339-amino-acid chain: Transcription initiation factor IIB (339 aa).

The segment at Glu39 to Gln70 adopts a TFIIB-type zinc-finger fold. Residues Cys43, Cys46, Cys62, and Cys65 each coordinate Zn(2+). 2 repeat units span residues Ser156–Leu239 and Asp250–Glu331.

This sequence belongs to the TFIIB family.

In terms of biological role, stabilizes TBP binding to an archaeal box-A promoter. Also responsible for recruiting RNA polymerase II to the pre-initiation complex (DNA-TBP-TFIIB). The chain is Transcription initiation factor IIB from Methanococcus maripaludis (strain C7 / ATCC BAA-1331).